Here is a 181-residue protein sequence, read N- to C-terminus: Large ribosomal subunit protein bL19 (181 aa).

The segment covering 162-173 (EKKAAAEAEAAK) has biased composition (basic and acidic residues). A disordered region spans residues 162-181 (EKKAAAEAEAAKAAEATPAE).

The protein belongs to the bacterial ribosomal protein bL19 family.

This protein is located at the 30S-50S ribosomal subunit interface and may play a role in the structure and function of the aminoacyl-tRNA binding site. This is Large ribosomal subunit protein bL19 from Mesorhizobium japonicum (strain LMG 29417 / CECT 9101 / MAFF 303099) (Mesorhizobium loti (strain MAFF 303099)).